We begin with the raw amino-acid sequence, 118 residues long: uncharacterized protein (118 aa).

Transmembrane regions (helical) follow at residues 5–25 and 40–57; these read AFFN…SMVI and FLTF…QHYI.

The protein localises to the membrane. This is an uncharacterized protein from African swine fever virus (strain Badajoz 1971 Vero-adapted) (Ba71V).